Consider the following 115-residue polypeptide: Large ribosomal subunit protein bL19 (115 aa).

This sequence belongs to the bacterial ribosomal protein bL19 family.

In terms of biological role, this protein is located at the 30S-50S ribosomal subunit interface and may play a role in the structure and function of the aminoacyl-tRNA binding site. The polypeptide is Large ribosomal subunit protein bL19 (Buchnera aphidicola subsp. Acyrthosiphon pisum (strain 5A)).